A 98-amino-acid chain; its full sequence is Large ribosomal subunit protein uL23 (98 aa).

It belongs to the universal ribosomal protein uL23 family. As to quaternary structure, part of the 50S ribosomal subunit. Contacts protein L29, and trigger factor when it is bound to the ribosome.

Its function is as follows. One of the early assembly proteins it binds 23S rRNA. One of the proteins that surrounds the polypeptide exit tunnel on the outside of the ribosome. Forms the main docking site for trigger factor binding to the ribosome. This is Large ribosomal subunit protein uL23 from Acidothermus cellulolyticus (strain ATCC 43068 / DSM 8971 / 11B).